Reading from the N-terminus, the 225-residue chain is Ribonuclease 3 (225 aa).

One can recognise an RNase III domain in the interval 4–127 (IEKLEQSLTY…IIGAIHLEAG (124 aa)). E40 is a Mg(2+) binding site. The active site involves D44. Mg(2+)-binding residues include D113 and E116. E116 is a catalytic residue. One can recognise a DRBM domain in the interval 154–223 (DYKTKLQEIT…AKIALEKLGS (70 aa)).

This sequence belongs to the ribonuclease III family. In terms of assembly, homodimer. It depends on Mg(2+) as a cofactor.

Its subcellular location is the cytoplasm. The enzyme catalyses Endonucleolytic cleavage to 5'-phosphomonoester.. In terms of biological role, digests double-stranded RNA. Involved in the processing of primary rRNA transcript to yield the immediate precursors to the large and small rRNAs (23S and 16S). Processes some mRNAs, and tRNAs when they are encoded in the rRNA operon. Processes pre-crRNA and tracrRNA of type II CRISPR loci if present in the organism. This is Ribonuclease 3 from Campylobacter jejuni subsp. doylei (strain ATCC BAA-1458 / RM4099 / 269.97).